Consider the following 220-residue polypeptide: Putative O-methyltransferase Mmcs_3995 (220 aa).

S-adenosyl-L-methionine-binding positions include Val47, Glu69, 71–72 (GT), Ser77, Asp95, and Val96. Asp143 is a binding site for substrate. Asp145 is an S-adenosyl-L-methionine binding site.

Belongs to the class I-like SAM-binding methyltransferase superfamily. Cation-dependent O-methyltransferase family.

In Mycobacterium sp. (strain MCS), this protein is Putative O-methyltransferase Mmcs_3995.